The sequence spans 365 residues: Chaperone protein DnaJ (365 aa).

In terms of domain architecture, J spans 5–71 (DFYEILGIAK…QKRQAYDQFG (67 aa)). The segment at 128 to 206 (GTTVKIRIPK…CHGKGVVHKQ (79 aa)) adopts a CR-type zinc-finger fold. 8 residues coordinate Zn(2+): Cys-141, Cys-144, Cys-158, Cys-161, Cys-180, Cys-183, Cys-194, and Cys-197. 4 CXXCXGXG motif repeats span residues 141–148 (CDTCSGTG), 158–165 (CLTCGGAG), 180–187 (CNACSGTG), and 194–201 (CNNCHGKG).

The protein belongs to the DnaJ family. As to quaternary structure, homodimer. Zn(2+) serves as cofactor.

The protein localises to the cytoplasm. In terms of biological role, participates actively in the response to hyperosmotic and heat shock by preventing the aggregation of stress-denatured proteins and by disaggregating proteins, also in an autonomous, DnaK-independent fashion. Unfolded proteins bind initially to DnaJ; upon interaction with the DnaJ-bound protein, DnaK hydrolyzes its bound ATP, resulting in the formation of a stable complex. GrpE releases ADP from DnaK; ATP binding to DnaK triggers the release of the substrate protein, thus completing the reaction cycle. Several rounds of ATP-dependent interactions between DnaJ, DnaK and GrpE are required for fully efficient folding. Also involved, together with DnaK and GrpE, in the DNA replication of plasmids through activation of initiation proteins. This chain is Chaperone protein DnaJ, found in Vesicomyosocius okutanii subsp. Calyptogena okutanii (strain HA).